Reading from the N-terminus, the 282-residue chain is Elongation factor Ts (282 aa).

Residues 80–83 (TDFV) form an involved in Mg(2+) ion dislocation from EF-Tu region.

This sequence belongs to the EF-Ts family.

The protein resides in the cytoplasm. Functionally, associates with the EF-Tu.GDP complex and induces the exchange of GDP to GTP. It remains bound to the aminoacyl-tRNA.EF-Tu.GTP complex up to the GTP hydrolysis stage on the ribosome. The chain is Elongation factor Ts (tsf) from Pasteurella multocida (strain Pm70).